The chain runs to 46 residues: Endochitinase 3 (46 aa).

Positions 1–21 are disordered; the sequence is MTPQGNKPSSHDVITGRWTPS.

It belongs to the glycosyl hydrolase 19 family. Chitinase class I subfamily.

It carries out the reaction Random endo-hydrolysis of N-acetyl-beta-D-glucosaminide (1-&gt;4)-beta-linkages in chitin and chitodextrins.. Functionally, defense against chitin-containing fungal and bacterial pathogens. The chain is Endochitinase 3 from Arachis hypogaea (Peanut).